The chain runs to 390 residues: Acetylornithine aminotransferase (390 aa).

Pyridoxal 5'-phosphate is bound by residues 103-104 (GT) and Phe129. Arg132 serves as a coordination point for N(2)-acetyl-L-ornithine. 214–217 (DEVQ) is a pyridoxal 5'-phosphate binding site. Position 243 is an N6-(pyridoxal phosphate)lysine (Lys243). Ser271 lines the N(2)-acetyl-L-ornithine pocket. Residue Thr272 coordinates pyridoxal 5'-phosphate. Residue Lys304 forms an Isoglutamyl lysine isopeptide (Lys-Gln) (interchain with Q-Cter in protein Pup) linkage.

It belongs to the class-III pyridoxal-phosphate-dependent aminotransferase family. ArgD subfamily. As to quaternary structure, homodimer. The cofactor is pyridoxal 5'-phosphate.

The protein resides in the cytoplasm. The catalysed reaction is N(2)-acetyl-L-ornithine + 2-oxoglutarate = N-acetyl-L-glutamate 5-semialdehyde + L-glutamate. It participates in amino-acid biosynthesis; L-arginine biosynthesis; N(2)-acetyl-L-ornithine from L-glutamate: step 4/4. The protein is Acetylornithine aminotransferase of Mycolicibacterium smegmatis (strain ATCC 700084 / mc(2)155) (Mycobacterium smegmatis).